The primary structure comprises 392 residues: 1-deoxy-D-xylulose 5-phosphate reductoisomerase (392 aa).

Positions 10, 11, 12, 13, 37, 38, and 124 each coordinate NADPH. Lysine 125 is a binding site for 1-deoxy-D-xylulose 5-phosphate. Residue glutamate 126 coordinates NADPH. A Mn(2+)-binding site is contributed by aspartate 150. The 1-deoxy-D-xylulose 5-phosphate site is built by serine 151, glutamate 152, serine 179, and histidine 202. Glutamate 152 is a Mn(2+) binding site. Glycine 208 contributes to the NADPH binding site. Positions 215, 220, 221, and 224 each coordinate 1-deoxy-D-xylulose 5-phosphate. Mn(2+) is bound at residue glutamate 224.

This sequence belongs to the DXR family. Mg(2+) serves as cofactor. Mn(2+) is required as a cofactor.

It carries out the reaction 2-C-methyl-D-erythritol 4-phosphate + NADP(+) = 1-deoxy-D-xylulose 5-phosphate + NADPH + H(+). Its pathway is isoprenoid biosynthesis; isopentenyl diphosphate biosynthesis via DXP pathway; isopentenyl diphosphate from 1-deoxy-D-xylulose 5-phosphate: step 1/6. Catalyzes the NADPH-dependent rearrangement and reduction of 1-deoxy-D-xylulose-5-phosphate (DXP) to 2-C-methyl-D-erythritol 4-phosphate (MEP). The protein is 1-deoxy-D-xylulose 5-phosphate reductoisomerase of Cupriavidus metallidurans (strain ATCC 43123 / DSM 2839 / NBRC 102507 / CH34) (Ralstonia metallidurans).